The following is a 293-amino-acid chain: 33 kDa chaperonin (293 aa).

Intrachain disulfides connect Cys-237-Cys-239 and Cys-271-Cys-274.

This sequence belongs to the HSP33 family. In terms of processing, under oxidizing conditions two disulfide bonds are formed involving the reactive cysteines. Under reducing conditions zinc is bound to the reactive cysteines and the protein is inactive.

The protein localises to the cytoplasm. Functionally, redox regulated molecular chaperone. Protects both thermally unfolding and oxidatively damaged proteins from irreversible aggregation. Plays an important role in the bacterial defense system toward oxidative stress. The polypeptide is 33 kDa chaperonin (Haemophilus influenzae (strain PittEE)).